A 368-amino-acid polypeptide reads, in one-letter code: Agmatine deiminase (368 aa).

Catalysis depends on Cys-357, which acts as the Amidino-cysteine intermediate.

This sequence belongs to the agmatine deiminase family. As to quaternary structure, homodimer.

The enzyme catalyses agmatine + H2O = N-carbamoylputrescine + NH4(+). It participates in amine and polyamine biosynthesis; putrescine biosynthesis via agmatine pathway; N-carbamoylputrescine from agmatine: step 1/1. Mediates the hydrolysis of agmatine into N-carbamoylputrescine in the arginine decarboxylase (ADC) pathway of putrescine biosynthesis, a basic polyamine. The chain is Agmatine deiminase from Pseudomonas aeruginosa (strain UCBPP-PA14).